The chain runs to 716 residues: Inhibitor of nuclear factor kappa-B kinase subunit epsilon (716 aa).

The region spanning 9-315 is the Protein kinase domain; it reads WHTDDLLGQG…LQRVVVHVFS (307 aa). ATP is bound at residue 15–23; that stretch reads LGQGATASV. K30 participates in a covalent cross-link: Glycyl lysine isopeptide (Lys-Gly) (interchain with G-Cter in ubiquitin). K38 is an ATP binding site. D135 functions as the Proton acceptor in the catalytic mechanism. Phosphoserine; by autocatalysis and IKKB is present on S172. A Glycyl lysine isopeptide (Lys-Gly) (interchain with G-Cter in SUMO1) cross-link involves residue K231. The interval 383–647 is interaction with DDX3X; that stretch reads STAIPKGLAF…VQESLSKLLE (265 aa). A Glycyl lysine isopeptide (Lys-Gly) (interchain with G-Cter in ubiquitin) cross-link involves residue K401. Residues 436 to 457 form a leucine-zipper region; that stretch reads QELMFRGLHWVMEVLQATCRRT. T501 bears the Phosphothreonine mark. A Phosphoserine modification is found at S664.

It belongs to the protein kinase superfamily. Ser/Thr protein kinase family. I-kappa-B kinase subfamily. In terms of assembly, homodimer. Interacts with MAVS/IPS1. Interacts (via protein kinase domain) with TTLL12 (via N-terminus); the interaction prevents MAVS binding to IKBKE. Interacts with the adapter proteins AZI2/NAP1, TANK and TBKBP1/SINTBAD. Interacts with SIKE1. Interacts with TICAM1/TRIF, IRF3 and RIGI; interactions are disrupted by the interaction between IKBKE and SIKE1. Interacts with TOPORS; induced by DNA damage. Interacts with CYLD. Interacts (when polyubiquitinated) with IKBKB, IKBKG and MYD88. Interacts with IFIH1. Interacts with DDX3X; the interaction may be induced upon virus infection. Interacts with TRIM6 (via SPRY box). Interacts with unanchored K48-linked polyubiquitin chains; this leads to IKBKE activation. Interacts with TBK1. Interacts with FKBP5. As to quaternary structure, (Microbial infection) Interacts (via Protein kinase domain) with arenavirus protein N; the interaction inhibits IKBKE kinase function. (Microbial infection) Interacts with Ebola virus protein VP35; the interaction leads to inhibition of cellular antiviral response by blocking necessary interactions between the IKBKE and MAVS/IPS as well as its substrates IRF3 and IRF7. In terms of assembly, (Microbial infection) Interacts with Severe fever with thrombocytopenia virus (SFTSV) NSs; this interaction this interaction sequesters IKBKE in NSs-induced cytoplasmic inclusion bodies thereby inhibiting the IFN responses. As to quaternary structure, (Microbial infection) Interacts with human T-cell leukemia virus 1/HTLV-1 protein HBZ. (Microbial infection) Interacts with Epstein-Barr virus (EBV) protein NEC2/BFRF1; this interaction inhibits IKBKE kinase activity and IRF3 nuclear translocation. Autophosphorylated and phosphorylated by IKBKB/IKKB. Phosphorylation at Ser-172 is enhanced by the interaction with DDX3X. Phosphorylated at Thr-501 upon IFN activation. Post-translationally, sumoylation by TOPORS upon DNA damage is required for protection of cells against DNA damage-induced cell death. Desumoylated by SENP1. In terms of processing, 'Lys-63'-linked polyubiquitinated at Lys-30 and Lys-401 by TRAF2:BIRC2 and TRAF2:BIRC3 complexes. Ubiquitination is induced by LPS, TNFA and interleukin-1 and required for full kinase activity and KF-kappa-B pathway activation. Highly expressed in spleen followed by thymus, peripheral blood leukocytes, pancreas, placenta. Weakly expressed in lung, kidney, prostate, ovary and colon.

The protein localises to the cytoplasm. It is found in the nucleus. The protein resides in the PML body. It carries out the reaction L-seryl-[I-kappa-B protein] + ATP = O-phospho-L-seryl-[I-kappa-B protein] + ADP + H(+). Serine/threonine kinase that plays an essential role in regulating inflammatory responses to viral infection, through the activation of the type I IFN, NF-kappa-B and STAT signaling. Also involved in TNFA and inflammatory cytokines, like Interleukin-1, signaling. Following activation of viral RNA sensors, such as RIG-I-like receptors, associates with DDX3X and phosphorylates interferon regulatory factors (IRFs), IRF3 and IRF7, as well as DDX3X. This activity allows subsequent homodimerization and nuclear translocation of the IRF3 leading to transcriptional activation of pro-inflammatory and antiviral genes including IFNB. In order to establish such an antiviral state, IKBKE forms several different complexes whose composition depends on the type of cell and cellular stimuli. Thus, several scaffolding molecules including IPS1/MAVS, TANK, AZI2/NAP1 or TBKBP1/SINTBAD can be recruited to the IKBKE-containing-complexes. Activated by polyubiquitination in response to TNFA and interleukin-1, regulates the NF-kappa-B signaling pathway through, at least, the phosphorylation of CYLD. Phosphorylates inhibitors of NF-kappa-B thus leading to the dissociation of the inhibitor/NF-kappa-B complex and ultimately the degradation of the inhibitor. In addition, is also required for the induction of a subset of ISGs which displays antiviral activity, may be through the phosphorylation of STAT1 at 'Ser-708'. Phosphorylation of STAT1 at 'Ser-708' also seems to promote the assembly and DNA binding of ISGF3 (STAT1:STAT2:IRF9) complexes compared to GAF (STAT1:STAT1) complexes, in this way regulating the balance between type I and type II IFN responses. Protects cells against DNA damage-induced cell death. Also plays an important role in energy balance regulation by sustaining a state of chronic, low-grade inflammation in obesity, wich leads to a negative impact on insulin sensitivity. Phosphorylates AKT1. This chain is Inhibitor of nuclear factor kappa-B kinase subunit epsilon (IKBKE), found in Homo sapiens (Human).